The primary structure comprises 319 residues: Taste receptor type 2 member 7 (319 aa).

Topologically, residues 1 to 9 (MADKVQTTL) are extracellular. Residues 10 to 30 (LFLAVGEFSVGILGNAFIGLV) form a helical membrane-spanning segment. Over 31–55 (NCMDWVKKRKIASIDLILTSLAISR) the chain is Cytoplasmic. Residues 56 to 76 (ICLLCVILLDCFILVLYPDVY) traverse the membrane as a helical segment. Residues 77 to 94 (ATGKEMRIIDFFWTLTNH) lie on the Extracellular side of the membrane. Residues 95-115 (LSIWFATCLSIYYXFRIANFF) form a helical membrane-spanning segment. At 116–128 (HPLFLWMKWRIDR) the chain is on the cytoplasmic side. A helical transmembrane segment spans residues 129-149 (VISWILLGCVVLSVFISLPAT). Residues 150–187 (ENLNADFRFCVKAKRKTNLTWSCRVNKTQHASTKLFLN) are Extracellular-facing. N-linked (GlcNAc...) asparagine glycosylation is found at asparagine 167 and asparagine 175. Residues 188 to 208 (LATLLPFCVCLMSFFLLILSL) form a helical membrane-spanning segment. At 209–235 (RRHIRRMQLSATGCRDPSTEAHVRALK) the chain is on the cytoplasmic side. Residues 236 to 256 (AVISFLLLFIAYYLSFLVATS) form a helical membrane-spanning segment. The Extracellular segment spans residues 257 to 266 (SYFMPETELA). A helical membrane pass occupies residues 267 to 287 (VIFGESIALIYPSSHSFILIL). Residues 288–319 (GNNKLRHASLKVIWKVMSILKGRKFQQHKQIG) lie on the Cytoplasmic side of the membrane.

It belongs to the G-protein coupled receptor T2R family.

It is found in the membrane. Functionally, gustducin-coupled receptor implicated in the perception of bitter compounds in the oral cavity and the gastrointestinal tract. Signals through PLCB2 and the calcium-regulated cation channel TRPM5. The chain is Taste receptor type 2 member 7 (TAS2R7) from Pan troglodytes (Chimpanzee).